A 156-amino-acid chain; its full sequence is NADH-ubiquinone oxidoreductase 20 kDa subunit (156 aa).

[4Fe-4S] cluster is bound by residues Cys-33, Cys-34, Cys-98, and Cys-128.

It belongs to the complex I 20 kDa subunit family. Requires [4Fe-4S] cluster as cofactor.

Its subcellular location is the mitochondrion. The enzyme catalyses a ubiquinone + NADH + 5 H(+)(in) = a ubiquinol + NAD(+) + 4 H(+)(out). The sequence is that of NADH-ubiquinone oxidoreductase 20 kDa subunit (NAD10) from Paramecium tetraurelia.